Consider the following 259-residue polypeptide: 3'-5' ssDNA/RNA exonuclease TatD (259 aa).

Residues E92, H128, and H153 each coordinate a divalent metal cation.

Belongs to the metallo-dependent hydrolases superfamily. TatD-type hydrolase family. TatD subfamily. Monomer. Requires Mg(2+) as cofactor.

The protein resides in the cytoplasm. 3'-5' exonuclease that prefers single-stranded DNA and RNA. May play a role in the H(2)O(2)-induced DNA damage repair. This is 3'-5' ssDNA/RNA exonuclease TatD from Erwinia amylovora (strain ATCC 49946 / CCPPB 0273 / Ea273 / 27-3).